A 307-amino-acid polypeptide reads, in one-letter code: Ribonuclease Z (307 aa).

The Zn(2+) site is built by histidine 63, histidine 65, aspartate 67, histidine 68, histidine 141, aspartate 212, and histidine 270. The active-site Proton acceptor is the aspartate 67.

The protein belongs to the RNase Z family. As to quaternary structure, homodimer. It depends on Zn(2+) as a cofactor.

The enzyme catalyses Endonucleolytic cleavage of RNA, removing extra 3' nucleotides from tRNA precursor, generating 3' termini of tRNAs. A 3'-hydroxy group is left at the tRNA terminus and a 5'-phosphoryl group is left at the trailer molecule.. Its function is as follows. Zinc phosphodiesterase, which displays some tRNA 3'-processing endonuclease activity. Probably involved in tRNA maturation, by removing a 3'-trailer from precursor tRNA. This is Ribonuclease Z from Bacillus cereus (strain ATCC 14579 / DSM 31 / CCUG 7414 / JCM 2152 / NBRC 15305 / NCIMB 9373 / NCTC 2599 / NRRL B-3711).